A 518-amino-acid polypeptide reads, in one-letter code: MIPDVSQALTWLERHPQALKGIQRGLERETLRVNADGTLATTGHPDALGSALTHKWVTTDFAEALLEFITPVDGDIQHMLTLMRDLHRYTARNLGDERMWPLSMPCYIAEGQDIELAQYGTSNIGRLKTLYREGLKNRYGALMQTISGVHYNFSLPMAFWQAKCGVVDGEDAKEKISAGYFRLIRNYYRFGWVIPYLFGASPAICSSFLQGKPTTLPFEKTDCGMYYLPYATSLRLSDLGYTNKSQSNLGITFNDLHEYVAGLKRAIKTPSTEYAEIGLEKDGKRLQINSNVLQIENELYAPIRPKRVTRSGETPSDALLRGGIEYIEVRSLDINPFSPIGVDEQQVRFLDLFMVWCVLADAPEMSSDELLCTRTNWNRVILEGRKPGLTLGIGCETAQFPLPKVGKDLFRDLKRVAQTLDSIHGGEDYQKVCDELVACFDNPELTFSARILRSMIDTGIGGTGKALGEAYRNLLREEPLEILREEDFIAEREASTRRQLEVEAADTEPFDAWLEKHA.

It belongs to the glutamate--cysteine ligase type 1 family. Type 1 subfamily.

It carries out the reaction L-cysteine + L-glutamate + ATP = gamma-L-glutamyl-L-cysteine + ADP + phosphate + H(+). The protein operates within sulfur metabolism; glutathione biosynthesis; glutathione from L-cysteine and L-glutamate: step 1/2. The chain is Glutamate--cysteine ligase from Citrobacter koseri (strain ATCC BAA-895 / CDC 4225-83 / SGSC4696).